The following is an 80-amino-acid chain: Exodeoxyribonuclease 7 small subunit (80 aa).

It belongs to the XseB family. In terms of assembly, heterooligomer composed of large and small subunits.

Its subcellular location is the cytoplasm. It catalyses the reaction Exonucleolytic cleavage in either 5'- to 3'- or 3'- to 5'-direction to yield nucleoside 5'-phosphates.. In terms of biological role, bidirectionally degrades single-stranded DNA into large acid-insoluble oligonucleotides, which are then degraded further into small acid-soluble oligonucleotides. The chain is Exodeoxyribonuclease 7 small subunit from Pseudomonas entomophila (strain L48).